Here is a 235-residue protein sequence, read N- to C-terminus: KNMITGAAQMDGAILVVSGADGPMPQTKEHILLAKQVGVPSIVVFLNKADQVDDEELLELVELEVRETLNEYEFPGDDIPITSGSALLALEALTENPDTNRTGDPWVKKIYDLMNEVDNYIPLPTRDTDKPFLMAIENVVSITGRGTVTTGRVERGADQVGDNIEIVGLKETRQATITGLEMFQKTLEKSVAGDNVGVLLRGIQKEEVEPGMVLAKPGSITPHKQFEAQVYILKK.

Residues 1 to 125 (KNMITGAAQM…EVDNYIPLPT (125 aa)) form the tr-type G domain. 47–50 (NKAD) contacts GTP.

Belongs to the TRAFAC class translation factor GTPase superfamily. Classic translation factor GTPase family. EF-Tu/EF-1A subfamily.

The protein localises to the plastid. Its subcellular location is the chloroplast. The catalysed reaction is GTP + H2O = GDP + phosphate + H(+). Its function is as follows. GTP hydrolase that promotes the GTP-dependent binding of aminoacyl-tRNA to the A-site of ribosomes during protein biosynthesis. This is Elongation factor Tu, chloroplastic (tufA) from Bryopsis plumosa (Green alga).